We begin with the raw amino-acid sequence, 702 residues long: Ferrioxamine B receptor (702 aa).

Residues 1 to 30 (MPLEMFMFATTRMALLIGGAIGGATFPLFA) form the signal peptide. Residues 55 to 168 (PDIETPQSVS…PGGIVALTSR (114 aa)) enclose the TBDR plug domain. Residues 173-702 (DAGGEVKLFA…SIVGSVSWAF (530 aa)) enclose the TBDR beta-barrel domain.

This sequence belongs to the TonB-dependent receptor family.

The protein resides in the cell outer membrane. Functionally, ferrioxamine binding and uptake, in association with the TonB protein. This chain is Ferrioxamine B receptor (foxA), found in Salmonella typhimurium (strain LT2 / SGSC1412 / ATCC 700720).